Consider the following 163-residue polypeptide: 6,7-dimethyl-8-ribityllumazine synthase (163 aa).

Residues Phe22, 56 to 58 (TFE), and 80 to 82 (AVI) contribute to the 5-amino-6-(D-ribitylamino)uracil site. A (2S)-2-hydroxy-3-oxobutyl phosphate-binding site is contributed by 85-86 (GT). His88 serves as the catalytic Proton donor. 5-amino-6-(D-ribitylamino)uracil is bound at residue Met113. Arg127 contacts (2S)-2-hydroxy-3-oxobutyl phosphate.

This sequence belongs to the DMRL synthase family.

The catalysed reaction is (2S)-2-hydroxy-3-oxobutyl phosphate + 5-amino-6-(D-ribitylamino)uracil = 6,7-dimethyl-8-(1-D-ribityl)lumazine + phosphate + 2 H2O + H(+). It functions in the pathway cofactor biosynthesis; riboflavin biosynthesis; riboflavin from 2-hydroxy-3-oxobutyl phosphate and 5-amino-6-(D-ribitylamino)uracil: step 1/2. Functionally, catalyzes the formation of 6,7-dimethyl-8-ribityllumazine by condensation of 5-amino-6-(D-ribitylamino)uracil with 3,4-dihydroxy-2-butanone 4-phosphate. This is the penultimate step in the biosynthesis of riboflavin. The sequence is that of 6,7-dimethyl-8-ribityllumazine synthase from Anaeromyxobacter sp. (strain Fw109-5).